The following is a 117-amino-acid chain: Large ribosomal subunit protein uL18 (117 aa).

The protein belongs to the universal ribosomal protein uL18 family. In terms of assembly, part of the 50S ribosomal subunit; part of the 5S rRNA/L5/L18/L25 subcomplex. Contacts the 5S and 23S rRNAs.

Functionally, this is one of the proteins that bind and probably mediate the attachment of the 5S RNA into the large ribosomal subunit, where it forms part of the central protuberance. The protein is Large ribosomal subunit protein uL18 of Alkalilimnicola ehrlichii (strain ATCC BAA-1101 / DSM 17681 / MLHE-1).